Reading from the N-terminus, the 489-residue chain is GTPase Der (489 aa).

EngA-type G domains are found at residues 30–199 (PVVS…KDKP) and 227–403 (FRLA…SRSH). GTP contacts are provided by residues 36 to 43 (GRQNVGKS), 85 to 89 (DTPGL), 151 to 154 (NKAD), 233 to 240 (GKPNSGKS), 280 to 284 (DTAGI), and 345 to 348 (NKWD). The 85-residue stretch at 404–488 (RKVSTSELNK…PIRLEFRSDR (85 aa)) folds into the KH-like domain.

It belongs to the TRAFAC class TrmE-Era-EngA-EngB-Septin-like GTPase superfamily. EngA (Der) GTPase family. Associates with the 50S ribosomal subunit.

GTPase that plays an essential role in the late steps of ribosome biogenesis. This chain is GTPase Der, found in Leptospira interrogans serogroup Icterohaemorrhagiae serovar copenhageni (strain Fiocruz L1-130).